The chain runs to 605 residues: Pyruvate decarboxylase 1 (605 aa).

The substrate site is built by aspartate 67 and histidine 154. The segment at 432-514 (DSWFNCQKLR…FLINNGGYTI (83 aa)) is thiamine pyrophosphate binding. 3 residues coordinate Mg(2+): aspartate 482, asparagine 509, and glycine 511. Glutamate 515 provides a ligand contact to substrate.

This sequence belongs to the TPP enzyme family. In terms of assembly, homotetramer. It depends on a metal cation as a cofactor. Thiamine diphosphate serves as cofactor.

The catalysed reaction is a 2-oxocarboxylate + H(+) = an aldehyde + CO2. The sequence is that of Pyruvate decarboxylase 1 (PDC1) from Oryza sativa subsp. indica (Rice).